Here is a 217-residue protein sequence, read N- to C-terminus: RING-H2 finger protein ATL40 (217 aa).

The chain crosses the membrane as a helical span at residues 28-48 (IFLVTTVSFSIIIIIVFVYYL). Residues 100-142 (CAVCLSLLEEKDNARMLPNCKHVFHVSCVDTWLTTQSTCPVCR) form an RING-type; atypical zinc finger. Composition is skewed to basic and acidic residues over residues 143–160 (TEAEPSHPRLEPEPREGP) and 186–217 (DSFRRILTRERSSNRRDHSRVDQDRELDIERQ). The tract at residues 143–217 (TEAEPSHPRL…QDRELDIERQ (75 aa)) is disordered.

Belongs to the RING-type zinc finger family. ATL subfamily.

It localises to the membrane. It catalyses the reaction S-ubiquitinyl-[E2 ubiquitin-conjugating enzyme]-L-cysteine + [acceptor protein]-L-lysine = [E2 ubiquitin-conjugating enzyme]-L-cysteine + N(6)-ubiquitinyl-[acceptor protein]-L-lysine.. It participates in protein modification; protein ubiquitination. This chain is RING-H2 finger protein ATL40 (ATL40), found in Arabidopsis thaliana (Mouse-ear cress).